Reading from the N-terminus, the 495-residue chain is Histidine--tRNA ligase (495 aa).

The protein belongs to the class-II aminoacyl-tRNA synthetase family. Homodimer.

The protein resides in the cytoplasm. It carries out the reaction tRNA(His) + L-histidine + ATP = L-histidyl-tRNA(His) + AMP + diphosphate + H(+). The polypeptide is Histidine--tRNA ligase (Ruegeria pomeroyi (strain ATCC 700808 / DSM 15171 / DSS-3) (Silicibacter pomeroyi)).